A 219-amino-acid polypeptide reads, in one-letter code: MASVTDGKAGVKDASDQNFDYMFKLLIIGNSSVGKTSFLFRYADDTFTPAFVSTVGIDFKVKTVYRHEKRVKLQIWDTAGQERYRTITTAYYRGAMGFILMYDITNEESFNAVQDWATQIKTYSWDNAQVILVGNKCDMEEERVVPTEKGRLLAEQLGFDFFEASAKENISVRQAFERLVDAICDKMSDTLDTDPSLLGTSKNTRLSDTPPLLQQNCSC.

Residue A2 is modified to N-acetylalanine. Residues S31, S32, V33, G34, K35, T36, S37, P49, and S53 each coordinate GTP. Residue T36 participates in Mg(2+) binding. Residues 45 to 58 carry the Switch 1 motif; the sequence is DTFTPAFVSTVGID. Mg(2+)-binding residues include T54 and D77. The short motif at 78-96 is the Switch 2 element; it reads TAGQERYRTITTAYYRGAM. G80 serves as a coordination point for GTP. Residue T86 is modified to Phosphothreonine. Residues N135, K136, D138, A166, and K167 each contribute to the GTP site. The residue at position 188 (S188) is a Phosphoserine. Residues C217 and C219 are each lipidated (S-geranylgeranyl cysteine). C219 is subject to Cysteine methyl ester.

It belongs to the small GTPase superfamily. Rab family. As to quaternary structure, interacts with RIMS1, RIMS2, RPH3A and RPH3AL. The GTP-bound form interacts with GAS8/DRC4 (via coiled-coil domains). Interacts with GDI2, CHM and CHML; phosphorylation at Thr-86 disrupts these interactions. Interacts with MADD (via uDENN domain); the GTP-bound form is preferred for interaction. Mg(2+) serves as cofactor. In terms of processing, phosphorylation of Thr-86 in the switch II region by LRRK2 prevents the association of RAB regulatory proteins, including CHM, CHML and RAB GDP dissociation inhibitor GDI2.

Its subcellular location is the cell membrane. The protein resides in the golgi apparatus. It catalyses the reaction GTP + H2O = GDP + phosphate + H(+). Regulated by guanine nucleotide exchange factors (GEFs) which promote the exchange of bound GDP for free GTP. Regulated by GTPase activating proteins (GAPs) which increase the GTP hydrolysis activity. Inhibited by GDP dissociation inhibitors (GDIs) which prevent Rab-GDP dissociation. Functionally, the small GTPases Rab are key regulators of intracellular membrane trafficking, from the formation of transport vesicles to their fusion with membranes. Rabs cycle between an inactive GDP-bound form and an active GTP-bound form that is able to recruit to membranes different sets of downstream effectors directly responsible for vesicle formation, movement, tethering and fusion. The polypeptide is Ras-related protein Rab-3B (RAB3B) (Bos taurus (Bovine)).